Here is a 141-residue protein sequence, read N- to C-terminus: Hemoglobin subunit alpha-D (141 aa).

Positions 1–141 (MLNHDEKQLI…VSAVLAEKYR (141 aa)) constitute a Globin domain. 2 residues coordinate heme b: His-58 and His-87.

The protein belongs to the globin family. Heterotetramer of two alpha-D chains and two beta chains. In terms of tissue distribution, red blood cells.

Functionally, involved in oxygen transport from the lung to the various peripheral tissues. This chain is Hemoglobin subunit alpha-D (HBAD), found in Chrysemys picta bellii (Western painted turtle).